The following is a 963-amino-acid chain: Seizure 6-like protein (963 aa).

The signal sequence occupies residues 1 to 31; it reads MPVARPQAAGPDRISLFLVAFLLGSPAAAQA. Disordered stretches follow at residues 28–63, 116–150, and 164–204; these read AAQA…GVTS, RPLA…TAPA, and LPHS…TTTS. Over 32-897 the chain is Extracellular; the sequence is EDGGPEGEMH…ESSLEGGNMA (866 aa). Residues 47–59 are compositionally biased toward low complexity; it reads LLPSASLESSLEE. Positions 120-135 are enriched in polar residues; the sequence is TPTTLQRLGSPASATT. Residues 191–204 are compositionally biased toward low complexity; that stretch reads TGSASEESQETTTS. Cys-221 and Cys-248 are disulfide-bonded. The 109-residue stretch at 221–329 folds into the CUB 1 domain; the sequence is CGVSFSDPEG…GTFQLHYQAF (109 aa). 3 N-linked (GlcNAc...) asparagine glycosylation sites follow: Asn-251, Asn-268, and Asn-290. In terms of domain architecture, Sushi 1 spans 331 to 390; sequence LSCPFPRRPDAGEVTVMDLHSGGVAHFHCHLGYELQGAKTLTCINASKPHWSSQEPVCSA. Intrachain disulfides connect Cys-333–Cys-373, Cys-359–Cys-388, and Cys-392–Cys-419. Residues Asn-375, Asn-398, Asn-414, Asn-454, Asn-516, and Asn-558 are each glycosylated (N-linked (GlcNAc...) asparagine). The CUB 2 domain occupies 392-502; the sequence is CGGAVHNATI…SAFNIRFEAF (111 aa). A Sushi 2 domain is found at 505–566; the sequence is GHCYEPYIQN…WNDTEPLCRA (62 aa). Intrachain disulfides connect Cys-507/Cys-549, Cys-534/Cys-564, and Cys-568/Cys-594. The CUB 3 domain occupies 568–679; that stretch reads CGGELSAVAG…QGFIMNYIEV (112 aa). Asn-614 and Asn-682 each carry an N-linked (GlcNAc...) asparagine glycan. Sushi domains lie at 683–742, 744–807, and 811–872; these read DSCS…FCEK, MYCT…HCVS, and LACD…ICKV. 6 disulfide bridges follow: Cys-685–Cys-727, Cys-713–Cys-740, Cys-746–Cys-788, Cys-774–Cys-805, Cys-813–Cys-855, and Cys-841–Cys-870. The helical transmembrane segment at 898–918 threads the bilayer; sequence LAIFIPVLLISLLLGGAYIYV. The Cytoplasmic segment spans residues 919-963; it reads TRCRQYSSLRLPLMYSHPYSQITVETEFDNPIYETGETREYEVSI.

This sequence belongs to the SEZ6 family. In terms of tissue distribution, expressed exclusively in the brain, predominantly in neurons. Wide expression in the gray matter of the brain with high levels in the olfactory bulb, anterior olfactory nuclei, hippocampal formation and cerebellar cortex. Detected diffusely and weakly in the white matter, such as the corpus callosum and cerebellar medulla. In the cerebellar cortex, intensely expressed in Purkinje cells and granule cells. Detected also in interneurons in the molecular layer.

The protein localises to the cell membrane. It is found in the endoplasmic reticulum membrane. Its function is as follows. Candidate tumor suppressor gene. May contribute to specialized endoplasmic reticulum functions in neurons. The polypeptide is Seizure 6-like protein (Sez6l) (Mus musculus (Mouse)).